The following is a 361-amino-acid chain: 3-dehydroquinate synthase (361 aa).

NAD(+) contacts are provided by residues 72–77 (SGEKEK), 130–131 (TT), lysine 142, and lysine 151. Positions 184, 247, and 264 each coordinate Zn(2+).

This sequence belongs to the sugar phosphate cyclases superfamily. Dehydroquinate synthase family. The cofactor is Co(2+). Requires Zn(2+) as cofactor. It depends on NAD(+) as a cofactor.

The protein localises to the cytoplasm. It catalyses the reaction 7-phospho-2-dehydro-3-deoxy-D-arabino-heptonate = 3-dehydroquinate + phosphate. It participates in metabolic intermediate biosynthesis; chorismate biosynthesis; chorismate from D-erythrose 4-phosphate and phosphoenolpyruvate: step 2/7. Catalyzes the conversion of 3-deoxy-D-arabino-heptulosonate 7-phosphate (DAHP) to dehydroquinate (DHQ). This chain is 3-dehydroquinate synthase, found in Bacillus mycoides (strain KBAB4) (Bacillus weihenstephanensis).